The chain runs to 267 residues: Mediator of RNA polymerase II transcription subunit 18 (267 aa).

The protein belongs to the Mediator complex subunit 18 family. In terms of assembly, component of the Mediator complex.

The protein localises to the nucleus. Functionally, component of the Mediator complex, a coactivator involved in the regulated transcription of nearly all RNA polymerase II-dependent genes. Mediator functions as a bridge to convey information from gene-specific regulatory proteins to the basal RNA polymerase II transcription machinery. Mediator is recruited to promoters by direct interactions with regulatory proteins and serves as a scaffold for the assembly of a functional preinitiation complex with RNA polymerase II and the general transcription factors. The sequence is that of Mediator of RNA polymerase II transcription subunit 18 (SRB5) from Coccidioides immitis (strain RS) (Valley fever fungus).